The chain runs to 417 residues: Phosphoglycerate kinase 1 (417 aa).

Ser2 bears the N-acetylserine mark. Ser2 and Ser4 each carry phosphoserine. N6-succinyllysine is present on Lys6. Position 11 is an N6-acetyllysine (Lys11). Positions 23, 24, 25, 26, 38, and 39 each coordinate (2R)-3-phosphoglycerate. Positions 38-43 (QRIKAA) are mitochondrial targeting region exposed following cis-trans isomerization by PIN1 and recognized by the TOM complex for mitochondrial translocation of the protein. Lys48 carries the post-translational modification N6-acetyllysine; alternate. An N6-succinyllysine; alternate modification is found at Lys48. (2R)-3-phosphoglycerate is bound by residues Ser62, His63, Gly65, and Arg66. The residue at position 75 (Lys75) is an N6-acetyllysine. Residue Tyr76 is modified to Phosphotyrosine. N6-acetyllysine is present on residues Lys86 and Lys91. Lys97 bears the N6-acetyllysine; alternate mark. At Lys97 the chain carries N6-(2-hydroxyisobutyryl)lysine; alternate. (2R)-3-phosphoglycerate-binding residues include Leu122 and Arg123. Lys131 carries the N6-acetyllysine; alternate modification. Lys131 carries the post-translational modification N6-malonyllysine; alternate. Lys146 carries the post-translational modification N6-acetyllysine. 2 residues coordinate (2R)-3-phosphoglycerate: His170 and Arg171. An N6-succinyllysine modification is found at Lys191. Position 196 is a phosphotyrosine (Tyr196). An N6-acetyllysine modification is found at Lys199. The residue at position 203 (Ser203) is a Phosphoserine. Gly214 serves as a coordination point for ADP. Residue Gly214 participates in CDP binding. The AMP site is built by Ala215 and Lys216. Ala215 is an ATP binding site. A Mg(2+)-binding site is contributed by Ala215. An N6-(2-hydroxyisobutyryl)lysine modification is found at Lys216. Mg(2+) contacts are provided by Ala218 and Asp219. Residue Asp219 coordinates CDP. Residue Lys220 coordinates AMP. Lys220 contacts ATP. Position 220 is an N6-(2-hydroxyisobutyryl)lysine (Lys220). An ADP-binding site is contributed by Gly238. Residue Gly238 participates in CDP binding. Gly239 provides a ligand contact to AMP. Gly239 is an ATP binding site. N6-acetyllysine occurs at positions 267 and 291. Gly313 is a binding site for AMP. Residue Gly313 participates in ATP binding. Lys323 carries the post-translational modification N6-(2-hydroxyisobutyryl)lysine. CDP is bound by residues Gly338, Val340, and Phe343. Phe343 contributes to the ADP binding site. Residue Glu344 coordinates AMP. An ATP-binding site is contributed by Glu344. N6-acetyllysine is present on Lys361. ATP contacts are provided by Asp375 and Thr376. Residue Asp375 coordinates Mg(2+).

It belongs to the phosphoglycerate kinase family. As to quaternary structure, monomer. Interacts with kinase MAPK1/ERK2; the interaction is direct, occurs under hypoxic conditions, and promotes its interaction with PIN1. Interacts with peptidyl-prolyl cis-trans isomerase PIN1; the interaction is direct, occurs under hypoxic conditions, and targets the protein to the mitochondrion by promoting interactions with the TOM complex. Interacts with mitochondrial circRNA mcPGK1 (via its 2nd stem-loop); the interaction is direct and targets the protein to the mitochondrion by promoting interactions with the TOM complex. Interacts with pyruvate dehydrogenase kinase PDK1; the interaction is direct, occurs under hypoxic conditions and leads to PDK1-mediated inhibition of pyruvate dehydrogenase complex activity. The cofactor is Mg(2+). In terms of processing, phosphorylated at Ser-203 by MAPK1/ERK2 under hypoxic conditions, which promotes its mitochondrial targeting.

Its subcellular location is the cytoplasm. The protein localises to the cytosol. It localises to the mitochondrion matrix. It carries out the reaction (2R)-3-phosphoglycerate + ATP = (2R)-3-phospho-glyceroyl phosphate + ADP. The enzyme catalyses L-seryl-[protein] + ATP = O-phospho-L-seryl-[protein] + ADP + H(+). Its pathway is carbohydrate degradation; glycolysis; pyruvate from D-glyceraldehyde 3-phosphate: step 2/5. Catalyzes one of the two ATP producing reactions in the glycolytic pathway via the reversible conversion of 1,3-diphosphoglycerate to 3-phosphoglycerate. Both L- and D- forms of purine and pyrimidine nucleotides can be used as substrates, but the activity is much lower on pyrimidines. In addition to its role as a glycolytic enzyme, it seems that PGK-1 acts as a polymerase alpha cofactor protein (primer recognition protein). Acts as a protein kinase when localized to the mitochondrion where it phosphorylates pyruvate dehydrogenase kinase PDK1 to inhibit pyruvate dehydrogenase complex activity and suppress the formation of acetyl-coenzyme A from pyruvate, and consequently inhibit oxidative phosphorylation and promote glycolysis. May play a role in sperm motility. This Cricetulus griseus (Chinese hamster) protein is Phosphoglycerate kinase 1 (PGK1).